Reading from the N-terminus, the 433-residue chain is tRNA-2-methylthio-N(6)-dimethylallyladenosine synthase (433 aa).

Residues 3–118 (KRLYIETLGC…IRDVIKQEKA (116 aa)) enclose the MTTase N-terminal domain. The [4Fe-4S] cluster site is built by cysteine 12, cysteine 49, cysteine 81, cysteine 150, cysteine 154, and cysteine 157. Residues 136-371 (RTSPYKAFIN…LHLQMLDSIS (236 aa)) enclose the Radical SAM core domain. Residues 372–433 (EQEKDKVYEV…RLSLEGELVG (62 aa)) form the TRAM domain.

Belongs to the methylthiotransferase family. MiaB subfamily. In terms of assembly, monomer. [4Fe-4S] cluster is required as a cofactor.

The protein localises to the cytoplasm. It catalyses the reaction N(6)-dimethylallyladenosine(37) in tRNA + (sulfur carrier)-SH + AH2 + 2 S-adenosyl-L-methionine = 2-methylsulfanyl-N(6)-dimethylallyladenosine(37) in tRNA + (sulfur carrier)-H + 5'-deoxyadenosine + L-methionine + A + S-adenosyl-L-homocysteine + 2 H(+). In terms of biological role, catalyzes the methylthiolation of N6-(dimethylallyl)adenosine (i(6)A), leading to the formation of 2-methylthio-N6-(dimethylallyl)adenosine (ms(2)i(6)A) at position 37 in tRNAs that read codons beginning with uridine. This chain is tRNA-2-methylthio-N(6)-dimethylallyladenosine synthase, found in Nitratiruptor sp. (strain SB155-2).